The following is a 145-amino-acid chain: DNA polymerase epsilon subunit 3 (145 aa).

A2 is subject to N-acetylalanine. T83 carries the post-translational modification Phosphothreonine. Positions 85–144 (LKEALEAYRREQKGKKEASEQKKKDKDKKDCEEQDKSREEEDEDEERLDEEEQNEEEEVD) form a coiled coil. Residues 93–123 (RREQKGKKEASEQKKKDKDKKDCEEQDKSRE) are compositionally biased toward basic and acidic residues. Positions 93 to 145 (RREQKGKKEASEQKKKDKDKKDCEEQDKSREEEDEDEERLDEEEQNEEEEVDN) are disordered. S121 carries the post-translational modification Phosphoserine. The span at 124 to 145 (EEDEDEERLDEEEQNEEEEVDN) shows a compositional bias: acidic residues.

Component of the DNA polymerase epsilon complex consisting of four subunits: the catalytic subunit POLE and the accessory subunits POLE2, POLE3 and POLE4. Interaction with POLE4 is a prerequisite for further binding with POLE and POLE2. Heterodimer with CHRAC1; binds to DNA. Component of the CHRAC ISWI chromatin remodeling complex at least composed of SMARCA5/SNF2H, BAZ1A/ACF1, CHRAC1 and POLE3; the complex preferentially binds DNA through the CHRAC1-POLE3 heterodimer and possesses ATP-dependent nucleosome-remodeling activity. Within the complex, the heterodimer with CHRAC1 interacts with SMARCA5/SNF2H; the interaction is direct and enhances nucleosome sliding activity by the SMARCA5/SNF2H and BAZ1A/ACF1 interaction. Within the complex, the heterodimer with CHRAC1 interacts with BAZ1A/ACF1; the interactions are direct.

The protein localises to the nucleus. Functionally, accessory component of the DNA polymerase epsilon complex. Participates in DNA repair and in chromosomal DNA replication. Forms a complex with CHRAC1 and binds naked DNA, which is then incorporated into chromatin, aided by the nucleosome-remodeling activity of ISWI/SNF2H and ACF1. Does not enhance nucleosome sliding activity of the ACF-5 ISWI chromatin remodeling complex. The polypeptide is DNA polymerase epsilon subunit 3 (Pole3) (Rattus norvegicus (Rat)).